The chain runs to 141 residues: MLDTQQIKEIIPHRYPFLLVDRITEVEEGKRAAGYKNVTANEDFFNGHFPEYPVMPGVLIVEALAQVGAVAMLIKEENRGRLAFFAGIDNCRFKKQVKPGDKLELEVDITRARGTIGRGKGVAKVDGELVCEAELTFALGE.

Residue His-48 is part of the active site.

Belongs to the thioester dehydratase family. FabZ subfamily.

The protein resides in the cytoplasm. The enzyme catalyses a (3R)-hydroxyacyl-[ACP] = a (2E)-enoyl-[ACP] + H2O. Its function is as follows. Involved in unsaturated fatty acids biosynthesis. Catalyzes the dehydration of short chain beta-hydroxyacyl-ACPs and long chain saturated and unsaturated beta-hydroxyacyl-ACPs. The polypeptide is 3-hydroxyacyl-[acyl-carrier-protein] dehydratase FabZ (Bacillus velezensis (strain DSM 23117 / BGSC 10A6 / LMG 26770 / FZB42) (Bacillus amyloliquefaciens subsp. plantarum)).